The chain runs to 287 residues: Lectin 10 (287 aa).

The Cytoplasmic segment spans residues 1 to 11 (MALSNLKSNRT). A helical membrane pass occupies residues 12 to 31 (LSSSLITIFIISLFLQYHNI). Topologically, residues 32–287 (KSQSSWQSRQ…IINWSFESAL (256 aa)) are extracellular. Asn124, Asn147, Asn243, and Asn280 each carry an N-linked (GlcNAc...) asparagine glycan.

This sequence belongs to the leguminous lectin family.

It localises to the membrane. Functionally, may be involved in arbuscular mycorrhizal (AM) symbiosis with AM fungi. The polypeptide is Lectin 10 (Medicago truncatula (Barrel medic)).